Reading from the N-terminus, the 209-residue chain is Uridine kinase (209 aa).

12-19 (GGSGSGKT) is a binding site for ATP.

It belongs to the uridine kinase family.

The protein localises to the cytoplasm. The catalysed reaction is uridine + ATP = UMP + ADP + H(+). It carries out the reaction cytidine + ATP = CMP + ADP + H(+). It participates in pyrimidine metabolism; CTP biosynthesis via salvage pathway; CTP from cytidine: step 1/3. It functions in the pathway pyrimidine metabolism; UMP biosynthesis via salvage pathway; UMP from uridine: step 1/1. This Listeria innocua serovar 6a (strain ATCC BAA-680 / CLIP 11262) protein is Uridine kinase.